Consider the following 122-residue polypeptide: Large ribosomal subunit protein uL14 (122 aa).

It belongs to the universal ribosomal protein uL14 family. As to quaternary structure, part of the 50S ribosomal subunit. Forms a cluster with proteins L3 and L19. In the 70S ribosome, L14 and L19 interact and together make contacts with the 16S rRNA in bridges B5 and B8.

Its function is as follows. Binds to 23S rRNA. Forms part of two intersubunit bridges in the 70S ribosome. The chain is Large ribosomal subunit protein uL14 from Enterococcus faecalis (strain ATCC 700802 / V583).